We begin with the raw amino-acid sequence, 214 residues long: Thiamine-phosphate synthase (214 aa).

4-amino-2-methyl-5-(diphosphooxymethyl)pyrimidine is bound by residues Gln40–Lys44 and Asn72. 2 residues coordinate Mg(2+): Asp73 and Asp92. Ser110 provides a ligand contact to 4-amino-2-methyl-5-(diphosphooxymethyl)pyrimidine. Ser137 to Thr139 is a binding site for 2-[(2R,5Z)-2-carboxy-4-methylthiazol-5(2H)-ylidene]ethyl phosphate. Lys140 provides a ligand contact to 4-amino-2-methyl-5-(diphosphooxymethyl)pyrimidine. 2-[(2R,5Z)-2-carboxy-4-methylthiazol-5(2H)-ylidene]ethyl phosphate is bound by residues Gly167 and Ile185 to Ser186.

The protein belongs to the thiamine-phosphate synthase family. Mg(2+) is required as a cofactor.

It carries out the reaction 2-[(2R,5Z)-2-carboxy-4-methylthiazol-5(2H)-ylidene]ethyl phosphate + 4-amino-2-methyl-5-(diphosphooxymethyl)pyrimidine + 2 H(+) = thiamine phosphate + CO2 + diphosphate. It catalyses the reaction 2-(2-carboxy-4-methylthiazol-5-yl)ethyl phosphate + 4-amino-2-methyl-5-(diphosphooxymethyl)pyrimidine + 2 H(+) = thiamine phosphate + CO2 + diphosphate. The enzyme catalyses 4-methyl-5-(2-phosphooxyethyl)-thiazole + 4-amino-2-methyl-5-(diphosphooxymethyl)pyrimidine + H(+) = thiamine phosphate + diphosphate. The protein operates within cofactor biosynthesis; thiamine diphosphate biosynthesis; thiamine phosphate from 4-amino-2-methyl-5-diphosphomethylpyrimidine and 4-methyl-5-(2-phosphoethyl)-thiazole: step 1/1. In terms of biological role, condenses 4-methyl-5-(beta-hydroxyethyl)thiazole monophosphate (THZ-P) and 2-methyl-4-amino-5-hydroxymethyl pyrimidine pyrophosphate (HMP-PP) to form thiamine monophosphate (TMP). The sequence is that of Thiamine-phosphate synthase from Wolinella succinogenes (strain ATCC 29543 / DSM 1740 / CCUG 13145 / JCM 31913 / LMG 7466 / NCTC 11488 / FDC 602W) (Vibrio succinogenes).